The sequence spans 338 residues: Inorganic pyrophosphatase (338 aa).

Position 129 (R129) interacts with diphosphate. Mg(2+)-binding residues include D166, D171, and D203.

It belongs to the PPase family. In terms of assembly, component of the NURF complex composed of Caf1-55, E(bx), Nurf-38 and Iswi. It depends on Mg(2+) as a cofactor.

Its subcellular location is the cytoplasm. The protein localises to the nucleus. It carries out the reaction diphosphate + H2O = 2 phosphate + H(+). Component of NURF (nucleosome remodeling factor), a complex which catalyzes ATP-dependent nucleosome sliding and facilitates transcription of chromatin. NURF is required for homeotic gene expression, proper larval blood cell development, normal male X chromosome morphology, ecdysteroid signaling and metamorphosis. Inorganic pyrophosphatase (PPase), hydrolyzes inorganic pyrophosphate to inorganic phosphate, essential for driving critical biosynthetic reactions including transcription, replication, and DNA repair. This Drosophila melanogaster (Fruit fly) protein is Inorganic pyrophosphatase (Nurf-38).